Consider the following 232-residue polypeptide: Phosphatidylserine decarboxylase proenzyme (232 aa).

S201 serves as the catalytic Schiff-base intermediate with substrate; via pyruvic acid. Residue S201 is modified to Pyruvic acid (Ser); by autocatalysis.

It belongs to the phosphatidylserine decarboxylase family. PSD-A subfamily. In terms of assembly, heterodimer of a large membrane-associated beta subunit and a small pyruvoyl-containing alpha subunit. It depends on pyruvate as a cofactor. Is synthesized initially as an inactive proenzyme. Formation of the active enzyme involves a self-maturation process in which the active site pyruvoyl group is generated from an internal serine residue via an autocatalytic post-translational modification. Two non-identical subunits are generated from the proenzyme in this reaction, and the pyruvate is formed at the N-terminus of the alpha chain, which is derived from the carboxyl end of the proenzyme. The post-translation cleavage follows an unusual pathway, termed non-hydrolytic serinolysis, in which the side chain hydroxyl group of the serine supplies its oxygen atom to form the C-terminus of the beta chain, while the remainder of the serine residue undergoes an oxidative deamination to produce ammonia and the pyruvoyl prosthetic group on the alpha chain.

The protein localises to the cell membrane. The enzyme catalyses a 1,2-diacyl-sn-glycero-3-phospho-L-serine + H(+) = a 1,2-diacyl-sn-glycero-3-phosphoethanolamine + CO2. Its pathway is phospholipid metabolism; phosphatidylethanolamine biosynthesis; phosphatidylethanolamine from CDP-diacylglycerol: step 2/2. Its function is as follows. Catalyzes the formation of phosphatidylethanolamine (PtdEtn) from phosphatidylserine (PtdSer). The protein is Phosphatidylserine decarboxylase proenzyme of Mycolicibacterium smegmatis (strain ATCC 700084 / mc(2)155) (Mycobacterium smegmatis).